The primary structure comprises 69 residues: DNA gyrase inhibitor YacG (69 aa).

Positions 13, 16, 32, and 36 each coordinate Zn(2+).

This sequence belongs to the DNA gyrase inhibitor YacG family. In terms of assembly, interacts with GyrB. The cofactor is Zn(2+).

In terms of biological role, inhibits all the catalytic activities of DNA gyrase by preventing its interaction with DNA. Acts by binding directly to the C-terminal domain of GyrB, which probably disrupts DNA binding by the gyrase. In Neisseria meningitidis serogroup B (strain ATCC BAA-335 / MC58), this protein is DNA gyrase inhibitor YacG.